We begin with the raw amino-acid sequence, 262 residues long: NAC domain-containing protein 71 (262 aa).

The NAC domain occupies 6 to 160 (LPPGFRFHPT…AFALCRVVKK (155 aa)). A DNA-binding region spans residues 107 to 166 (AGYRKTLVFYEGRAPLGDRTNWFMHEYRLCDIDDHSQKSPNFKGAFALCRVVKKNELKKN).

Its subcellular location is the nucleus. In terms of biological role, transcription factor involved in tissue reunion of wounded inflorescence stems. Required for the division of pith cells in the reunion process, which is dependent on polar-transported auxin and the wound-inducible hormones ethylene and jasmonate. Binds to the promoters of XTH19 and XTH20 to induce their expression via auxin signaling. XTH19 and XTH20 are involved in cell proliferation in the tissue reunion process of incised stems. Involved in hypocotyl graft union formation. Required for the auxin- mediated promotion of vascular tissue proliferation during hypocotyl graft attachment. The sequence is that of NAC domain-containing protein 71 from Arabidopsis thaliana (Mouse-ear cress).